The following is a 158-amino-acid chain: UPF0262 protein R00612 (158 aa).

This sequence belongs to the UPF0262 family.

The protein is UPF0262 protein R00612 of Rhizobium meliloti (strain 1021) (Ensifer meliloti).